We begin with the raw amino-acid sequence, 233 residues long: Probable 2-phosphosulfolactate phosphatase (233 aa).

The protein belongs to the ComB family. The cofactor is Mg(2+).

It catalyses the reaction (2R)-O-phospho-3-sulfolactate + H2O = (2R)-3-sulfolactate + phosphate. In Symbiobacterium thermophilum (strain DSM 24528 / JCM 14929 / IAM 14863 / T), this protein is Probable 2-phosphosulfolactate phosphatase.